Reading from the N-terminus, the 773-residue chain is 5-methyltetrahydropteroyltriglutamate--homocysteine methyltransferase (773 aa).

5-methyltetrahydropteroyltri-L-glutamate-binding positions include 16-19 (RELK) and Lys116. L-homocysteine-binding positions include 437 to 439 (IGS) and Glu490. Residues 437–439 (IGS) and Glu490 contribute to the L-methionine site. Residues 521 to 522 (RC) and Trp567 each bind 5-methyltetrahydropteroyltri-L-glutamate. Asp605 contacts L-homocysteine. Asp605 serves as a coordination point for L-methionine. Glu611 serves as a coordination point for 5-methyltetrahydropteroyltri-L-glutamate. Zn(2+) is bound by residues His647, Cys649, and Glu671. His700 acts as the Proton donor in catalysis. Residue Cys732 coordinates Zn(2+).

The protein belongs to the vitamin-B12 independent methionine synthase family. Requires Zn(2+) as cofactor.

The catalysed reaction is 5-methyltetrahydropteroyltri-L-glutamate + L-homocysteine = tetrahydropteroyltri-L-glutamate + L-methionine. The protein operates within amino-acid biosynthesis; L-methionine biosynthesis via de novo pathway; L-methionine from L-homocysteine (MetE route): step 1/1. In terms of biological role, catalyzes the transfer of a methyl group from 5-methyltetrahydrofolate to homocysteine resulting in methionine formation. This is 5-methyltetrahydropteroyltriglutamate--homocysteine methyltransferase from Alkalilimnicola ehrlichii (strain ATCC BAA-1101 / DSM 17681 / MLHE-1).